We begin with the raw amino-acid sequence, 162 residues long: Ribosome maturation factor RimM (162 aa).

The PRC barrel domain maps to 90 to 161 (EDCYYEADIV…KIIIKPLEVW (72 aa)).

It belongs to the RimM family. As to quaternary structure, binds ribosomal protein uS19.

The protein localises to the cytoplasm. In terms of biological role, an accessory protein needed during the final step in the assembly of 30S ribosomal subunit, possibly for assembly of the head region. Essential for efficient processing of 16S rRNA. May be needed both before and after RbfA during the maturation of 16S rRNA. It has affinity for free ribosomal 30S subunits but not for 70S ribosomes. This is Ribosome maturation factor RimM from Clostridium novyi (strain NT).